Reading from the N-terminus, the 291-residue chain is Porphobilinogen deaminase (291 aa).

An S-(dipyrrolylmethanemethyl)cysteine modification is found at Cys-237.

The protein belongs to the HMBS family. Monomer. The cofactor is dipyrromethane.

It carries out the reaction 4 porphobilinogen + H2O = hydroxymethylbilane + 4 NH4(+). Its pathway is porphyrin-containing compound metabolism; protoporphyrin-IX biosynthesis; coproporphyrinogen-III from 5-aminolevulinate: step 2/4. Tetrapolymerization of the monopyrrole PBG into the hydroxymethylbilane pre-uroporphyrinogen in several discrete steps. The protein is Porphobilinogen deaminase of Clostridium acetobutylicum (strain ATCC 824 / DSM 792 / JCM 1419 / IAM 19013 / LMG 5710 / NBRC 13948 / NRRL B-527 / VKM B-1787 / 2291 / W).